Reading from the N-terminus, the 350-residue chain is Beta-ketoacyl-[acyl-carrier-protein] synthase III (350 aa).

Active-site residues include Cys120 and His256. Residues 257-261 (QANVR) are ACP-binding. Asn286 is an active-site residue.

This sequence belongs to the thiolase-like superfamily. FabH family. Homodimer.

The protein resides in the cytoplasm. The catalysed reaction is malonyl-[ACP] + acetyl-CoA + H(+) = 3-oxobutanoyl-[ACP] + CO2 + CoA. It participates in lipid metabolism; fatty acid biosynthesis. Its function is as follows. Catalyzes the condensation reaction of fatty acid synthesis by the addition to an acyl acceptor of two carbons from malonyl-ACP. Catalyzes the first condensation reaction which initiates fatty acid synthesis and may therefore play a role in governing the total rate of fatty acid production. Possesses both acetoacetyl-ACP synthase and acetyl transacylase activities. Its substrate specificity determines the biosynthesis of branched-chain and/or straight-chain of fatty acids. The sequence is that of Beta-ketoacyl-[acyl-carrier-protein] synthase III from Deinococcus deserti (strain DSM 17065 / CIP 109153 / LMG 22923 / VCD115).